A 501-amino-acid chain; its full sequence is Aldehyde dehydrogenase, cytosolic 1 (501 aa).

Ser-2 carries the post-translational modification N-acetylserine. N6-acetyllysine is present on residues Lys-91 and Lys-128. 246–251 contributes to the NAD(+) binding site; sequence GSTEVG. Residue Lys-252 is modified to N6-acetyllysine. The active-site Proton acceptor is Glu-269. Cys-303 acts as the Nucleophile in catalysis. Residues Lys-353, Lys-367, and Lys-410 each carry the N6-acetyllysine modification. A Phosphoserine modification is found at Ser-413. N6-acetyllysine occurs at positions 419 and 435.

It belongs to the aldehyde dehydrogenase family. As to quaternary structure, homotetramer. As to expression, highest level in liver, high level in lung, low level in kidney and testis.

It is found in the cytoplasm. The catalysed reaction is an aldehyde + NAD(+) + H2O = a carboxylate + NADH + 2 H(+). Its pathway is alcohol metabolism; ethanol degradation; acetate from ethanol: step 2/2. In terms of biological role, can oxidize benzaldehyde, propionaldehyde and acetaldehyde. No detectable activity with retinal. This is Aldehyde dehydrogenase, cytosolic 1 from Mus musculus (Mouse).